The chain runs to 259 residues: Pimeloyl-[acyl-carrier protein] methyl ester esterase (259 aa).

The AB hydrolase-1 domain maps to 16–241 (FVMLHGWGMN…QSAHVPFISH (226 aa)). Substrate-binding positions include Trp22, 82–83 (SM), and 143–147 (FLLLQ). The Nucleophile role is filled by Ser82. Active-site residues include Asp207 and His235. Substrate is bound at residue His235.

Belongs to the AB hydrolase superfamily. Carboxylesterase BioH family. In terms of assembly, monomer.

The protein localises to the cytoplasm. The catalysed reaction is 6-carboxyhexanoyl-[ACP] methyl ester + H2O = 6-carboxyhexanoyl-[ACP] + methanol + H(+). The protein operates within cofactor biosynthesis; biotin biosynthesis. In terms of biological role, the physiological role of BioH is to remove the methyl group introduced by BioC when the pimeloyl moiety is complete. It allows to synthesize pimeloyl-ACP via the fatty acid synthetic pathway through the hydrolysis of the ester bonds of pimeloyl-ACP esters. This chain is Pimeloyl-[acyl-carrier protein] methyl ester esterase, found in Hamiltonella defensa subsp. Acyrthosiphon pisum (strain 5AT).